Consider the following 260-residue polypeptide: Cytosolic Fe-S cluster assembly factor Nubp2 homolog 2 (260 aa).

Gly-14–Ser-21 provides a ligand contact to ATP. 2 residues coordinate [4Fe-4S] cluster: Cys-188 and Cys-191.

It belongs to the Mrp/NBP35 ATP-binding proteins family. NUBP2/CFD1 subfamily. As to quaternary structure, heterotetramer of 2 Nubp1 and 2 Nubp2 chains. It depends on [4Fe-4S] cluster as a cofactor.

Its subcellular location is the cytoplasm. Its function is as follows. Component of the cytosolic iron-sulfur (Fe/S) protein assembly (CIA) machinery. Required for maturation of extramitochondrial Fe-S proteins. The Nubp1-Nubp2 heterotetramer forms a Fe-S scaffold complex, mediating the de novo assembly of an Fe-S cluster and its transfer to target apoproteins. This Drosophila yakuba (Fruit fly) protein is Cytosolic Fe-S cluster assembly factor Nubp2 homolog 2.